A 124-amino-acid chain; its full sequence is Class I hydrophobin 1 (124 aa).

The first 18 residues, 1-18 (MRFSIATVVLSLAAMVVA), serve as a signal peptide directing secretion. 4 disulfides stabilise this stretch: cysteine 35-cysteine 85, cysteine 43-cysteine 79, cysteine 44-cysteine 63, and cysteine 86-cysteine 97.

It belongs to the fungal hydrophobin family.

It is found in the secreted. The protein resides in the cell wall. Aerial growth, conidiation, and dispersal of filamentous fungi in the environment rely upon a capability of their secreting small amphipathic proteins called hydrophobins (HPBs) with low sequence identity. Class I can self-assemble into an outermost layer of rodlet bundles on aerial cell surfaces, conferring cellular hydrophobicity that supports fungal growth, development and dispersal; whereas Class II form highly ordered films at water-air interfaces through intermolecular interactions but contribute nothing to the rodlet structure. In Botryotinia fuckeliana, hydrophobins are not involved in conferring surface hydrophobicity to conidia and aerial hyphae and their function in sclerotia and fruiting bodies remains to be investigated. The chain is Class I hydrophobin 1 (Bhp1) from Botryotinia fuckeliana (strain B05.10) (Noble rot fungus).